A 426-amino-acid polypeptide reads, in one-letter code: Pannexin-1 (426 aa).

Over 1–40 (MAIAQLATEYVFSDFLLKEPTEPKFKGLRLELAVDKMVTC) the chain is Cytoplasmic. Cysteine 40 is modified (S-nitrosocysteine). A helical transmembrane segment spans residues 41-61 (IAVGLPLLLISLAFAQEISIG). Residues 62–106 (TQISCFSPSSFSWRQAAFVDSYCWAAVQQKNSLQSESGNLPLWLH) lie on the Extracellular side of the membrane. 2 cysteine pairs are disulfide-bonded: cysteine 66/cysteine 265 and cysteine 84/cysteine 246. Residues 107–127 (KFFPYILLLFAILLYLPPLFW) form a helical membrane-spanning segment. Residues 128–217 (RFAAAPHICS…NLIIKYISCR (90 aa)) are Cytoplasmic-facing. Tyrosine 199 carries the post-translational modification Phosphotyrosine. The chain crosses the membrane as a helical span at residues 218 to 238 (LLTLIIILLACIYLGYYFSLS). Over 239–266 (SLSDEFVCSIKSGILRNDSTVPDQFQCK) the chain is Extracellular. Asparagine 255 carries an N-linked (GlcNAc...) asparagine glycan. The chain crosses the membrane as a helical span at residues 267–287 (LIAVGIFQLLSVINLVVYVLL). Residues 288-426 (APVVVYTLFV…ARQRLLDSSC (139 aa)) lie on the Cytoplasmic side of the membrane. Cysteine 347 is modified (S-nitrosocysteine). The segment covering 405–414 (DSETKANNGE) has biased composition (polar residues). The disordered stretch occupies residues 405-426 (DSETKANNGEKNARQRLLDSSC). Positions 415 to 426 (KNARQRLLDSSC) are enriched in basic and acidic residues.

Belongs to the pannexin family. As to quaternary structure, homoheptameric. S-nitrosylation inhibits channel currents and ATP release. In terms of processing, N-glycosylation plays a role in cell surface targeting. Glycosylation at its extracellular surface makes unlikely that two oligomers could dock to form an intercellular channel such as in gap junctions. Exists in three glycosylation states: non-glycosylated (GLY0), high-mannose glycosylated (GLY1), and fully mature glycosylated (GLY2). Post-translationally, cleaved by CASP3 and CASP7 during apoptosis. Cleavage opens the channel for the release of metabolites and induces plasma membrane permeability during apoptosis. Phosphorylated at Tyr-199 by SRC. Phosphorylation activates ATP release. Constitutively phosphorylated in vascular smooth muscle cells. As to expression, widely expressed. Highest expression is observed in oocytes and brain. Detected at very low levels in sperm cells.

It is found in the cell membrane. The protein localises to the endoplasmic reticulum membrane. The catalysed reaction is chloride(in) = chloride(out). It catalyses the reaction iodide(out) = iodide(in). It carries out the reaction ATP(in) = ATP(out). The enzyme catalyses K(+)(in) = K(+)(out). The catalysed reaction is Ca(2+)(in) = Ca(2+)(out). It catalyses the reaction Na(+)(in) = Na(+)(out). It carries out the reaction nitrate(in) = nitrate(out). The enzyme catalyses L-aspartate(out) = L-aspartate(in). The catalysed reaction is L-glutamate(out) = L-glutamate(in). It catalyses the reaction D-gluconate(in) = D-gluconate(out). It carries out the reaction spermidine(in) = spermidine(out). Ion channel involved in a variety of physiological functions such as blood pressure regulation, apoptotic cell clearance and oogenesis. Forms anion-selective channels with relatively low conductance and an order of permeabilities: nitrate&gt;iodide&gt;chlroride&gt;&gt;aspartate=glutamate=gluconate. Can release ATP upon activation through phosphorylation or cleavage at C-terminus. May play a role as a Ca(2+)-leak channel to regulate ER Ca(2+) homeostasis. Functionally, during apoptosis, the C terminal tail is cleaved by caspases, which opens the main pore acting as a large-pore ATP efflux channel with a broad distribution, which allows the regulated release of molecules and ions smaller than 1 kDa, such as nucleotides ATP and UTP, and selective plasma membrane permeability to attract phagocytes that engulf the dying cells. This is Pannexin-1 from Homo sapiens (Human).